The primary structure comprises 266 residues: Gap junction beta-4 protein (266 aa).

An intramembrane segment occupies 2-13 (NWGFLQGILSGV). The Cytoplasmic segment spans residues 14–20 (NKYSTAL). The helical transmembrane segment at 21–40 (GRIWLSVVFIFRVLVYVVAA) threads the bilayer. Over 41 to 73 (EEVWDDDQKDFICNTKQPGCPNVCYDEFFPVSH) the chain is Extracellular. Disulfide bonds link Cys53-Cys175, Cys60-Cys169, and Cys64-Cys164. Residues 74–94 (VRLWALQLILVTCPSLLVVMH) traverse the membrane as a helical segment. Topologically, residues 95–130 (VAYREERERKHRLKHGPNAPALYSNLSKKRGGLWWT) are cytoplasmic. Residues 131–151 (YLLSLIFKAAVDSGFLYIFHC) form a helical membrane-spanning segment. The Extracellular portion of the chain corresponds to 152-184 (IYKDYDMPRVVACSVTPCPHTVDCYIARPTEKK). A helical transmembrane segment spans residues 185–205 (VFTYFMVVTAAICILLNLSEV). Over 206 to 266 (VYLVGKRCME…MATVDAGVYP (61 aa)) the chain is Cytoplasmic.

Belongs to the connexin family. Beta-type (group I) subfamily. As to quaternary structure, a hemichannel or connexon is composed of a hexamer of connexins. A functional gap junction is formed by the apposition of two hemichannels. Forms heteromeric channels with GJB2. Detected in cochlea (at protein level). Detected in cochlea. Expressed in skin.

The protein localises to the cell membrane. It localises to the cell junction. It is found in the gap junction. Its function is as follows. Structural component of gap junctions. Gap junctions are dodecameric channels that connect the cytoplasm of adjoining cells. They are formed by the docking of two hexameric hemichannels, one from each cell membrane. Small molecules and ions diffuse from one cell to a neighboring cell via the central pore. The polypeptide is Gap junction beta-4 protein (Gjb4) (Mus musculus (Mouse)).